Reading from the N-terminus, the 235-residue chain is UPF0502 protein Bmul_3231/BMULJ_05293 (235 aa).

Belongs to the UPF0502 family.

The protein is UPF0502 protein Bmul_3231/BMULJ_05293 of Burkholderia multivorans (strain ATCC 17616 / 249).